Consider the following 493-residue polypeptide: Cobyric acid synthase (493 aa).

The region spanning 246-440 is the GATase cobBQ-type domain; sequence PIDIAVIKMP…IHGVFDGVVF (195 aa). C326 (nucleophile) is an active-site residue. H432 is a catalytic residue.

It belongs to the CobB/CobQ family. CobQ subfamily.

It functions in the pathway cofactor biosynthesis; adenosylcobalamin biosynthesis. Catalyzes amidations at positions B, D, E, and G on adenosylcobyrinic A,C-diamide. NH(2) groups are provided by glutamine, and one molecule of ATP is hydrogenolyzed for each amidation. In Clostridium botulinum (strain Kyoto / Type A2), this protein is Cobyric acid synthase.